A 602-amino-acid chain; its full sequence is Arginine--tRNA ligase (602 aa).

Residues Ala-124–Arg-134 carry the 'HIGH' region motif.

This sequence belongs to the class-I aminoacyl-tRNA synthetase family.

It is found in the cytoplasm. The enzyme catalyses tRNA(Arg) + L-arginine + ATP = L-arginyl-tRNA(Arg) + AMP + diphosphate. In Halorubrum lacusprofundi (strain ATCC 49239 / DSM 5036 / JCM 8891 / ACAM 34), this protein is Arginine--tRNA ligase.